The chain runs to 121 residues: Dihydroneopterin aldolase (121 aa).

Residues Glu22, Tyr54, and 73–74 (IE) each bind substrate. The Proton donor/acceptor role is filled by Lys100.

It belongs to the DHNA family. In terms of assembly, homooctamer. Four molecules assemble into a ring, and two rings come together to give a cylinder with a hole of at least 13 a diameter.

The catalysed reaction is 7,8-dihydroneopterin = 6-hydroxymethyl-7,8-dihydropterin + glycolaldehyde. It carries out the reaction 7,8-dihydroneopterin = 7,8-dihydromonapterin. It participates in cofactor biosynthesis; tetrahydrofolate biosynthesis; 2-amino-4-hydroxy-6-hydroxymethyl-7,8-dihydropteridine diphosphate from 7,8-dihydroneopterin triphosphate: step 3/4. Catalyzes the conversion of 7,8-dihydroneopterin to 6-hydroxymethyl-7,8-dihydropterin. Can also catalyze the epimerization of carbon 2' of dihydroneopterin to dihydromonapterin. The polypeptide is Dihydroneopterin aldolase (folB) (Staphylococcus epidermidis (strain ATCC 35984 / DSM 28319 / BCRC 17069 / CCUG 31568 / BM 3577 / RP62A)).